The primary structure comprises 307 residues: Geranylgeranyl diphosphate synthase (307 aa).

Isopentenyl diphosphate is bound by residues Lys52, Arg55, and His86. Mg(2+) contacts are provided by Asp93 and Asp99. A (2E,6E)-farnesyl diphosphate-binding site is contributed by Arg104. Arg105 contacts isopentenyl diphosphate. The (2E,6E)-farnesyl diphosphate site is built by Lys188, Thr189, and Gln226.

Belongs to the FPP/GGPP synthase family. Mg(2+) serves as cofactor.

The enzyme catalyses isopentenyl diphosphate + (2E,6E)-farnesyl diphosphate = (2E,6E,10E)-geranylgeranyl diphosphate + diphosphate. The protein operates within isoprenoid biosynthesis; geranylgeranyl diphosphate biosynthesis; geranylgeranyl diphosphate from farnesyl diphosphate and isopentenyl diphosphate: step 1/1. Catalyzes the condensation of farnesyl diphosphate (FPP) and isopentenyl diphosphate (IPP) to yield geranylgeranyl diphosphate (GGPP) needed for biosynthesis of carotenoids and diterpenes. This is Geranylgeranyl diphosphate synthase (crtE) from Pseudescherichia vulneris (Escherichia vulneris).